The primary structure comprises 75 residues: UPF0154 protein SERP0914 (75 aa).

The helical transmembrane segment at 3–23 threads the bilayer; that stretch reads IWVAIILIVIALIAGLIGGFL.

This sequence belongs to the UPF0154 family.

It is found in the membrane. The sequence is that of UPF0154 protein SERP0914 from Staphylococcus epidermidis (strain ATCC 35984 / DSM 28319 / BCRC 17069 / CCUG 31568 / BM 3577 / RP62A).